A 143-amino-acid polypeptide reads, in one-letter code: Large ribosomal subunit protein uL11 (143 aa).

This sequence belongs to the universal ribosomal protein uL11 family. In terms of assembly, part of the ribosomal stalk of the 50S ribosomal subunit. Interacts with L10 and the large rRNA to form the base of the stalk. L10 forms an elongated spine to which L12 dimers bind in a sequential fashion forming a multimeric L10(L12)X complex. Post-translationally, one or more lysine residues are methylated.

Functionally, forms part of the ribosomal stalk which helps the ribosome interact with GTP-bound translation factors. The chain is Large ribosomal subunit protein uL11 from Polynucleobacter necessarius subsp. necessarius (strain STIR1).